The following is a 259-amino-acid chain: uncharacterized protein (259 aa).

Residues methionine 1 to threonine 19 constitute a signal peptide (or 26). Glycine 214–threonine 221 is an ATP binding site.

This is an uncharacterized protein from Bacillus subtilis (strain 168).